The following is a 1866-amino-acid chain: Nucleoporin Nup188 (1866 aa).

Belongs to the Nup188 family. As to quaternary structure, part of the nuclear pore complex (NPC).

It is found in the nucleus. The protein resides in the nuclear pore complex. Its function is as follows. Component of the nuclear pore complex (NPC), a complex required for the trafficking across the nuclear envelope. Required for proper protein transport into the nucleus. The chain is Nucleoporin Nup188 from Drosophila melanogaster (Fruit fly).